A 404-amino-acid chain; its full sequence is Keratin, type I cuticular Ha3-I (404 aa).

The interval 1 to 56 (MSYSCGLPNLSCRTSCSSRPCVPPSCHGCTLPGACNIPANVSNCNWFCEGSFNGSE) is head. The 312-residue stretch at 56 to 367 (EKETMQFLND…SLLESEDCKL (312 aa)) folds into the IF rod domain. Positions 57–91 (KETMQFLNDRLASYLEKVRQLERDNAELENLIRER) are coil 1A. The linker 1 stretch occupies residues 92–102 (SQQQEPLVCAS). Residues 103-203 (YQSYFKTIEE…HEQEVNTLRC (101 aa)) form a coil 1B region. The linker 12 stretch occupies residues 204 to 219 (QLGGRLNVEVDAAPAV). The segment at 220–363 (DLNQVLNETR…NTYRSLLESE (144 aa)) is coil 2. The tract at residues 364 to 404 (DCKLPSNPCAITNACDKSTGPCISNPCGPRARCGPCNTFGY) is tail.

Belongs to the intermediate filament family.

This chain is Keratin, type I cuticular Ha3-I, found in Pan troglodytes (Chimpanzee).